Consider the following 335-residue polypeptide: Phosphate acyltransferase (335 aa).

The protein belongs to the PlsX family. As to quaternary structure, homodimer. Probably interacts with PlsY.

The protein localises to the cytoplasm. It catalyses the reaction a fatty acyl-[ACP] + phosphate = an acyl phosphate + holo-[ACP]. Its pathway is lipid metabolism; phospholipid metabolism. Its function is as follows. Catalyzes the reversible formation of acyl-phosphate (acyl-PO(4)) from acyl-[acyl-carrier-protein] (acyl-ACP). This enzyme utilizes acyl-ACP as fatty acyl donor, but not acyl-CoA. The sequence is that of Phosphate acyltransferase from Clostridium botulinum (strain ATCC 19397 / Type A).